A 307-amino-acid chain; its full sequence is 4-hydroxythreonine-4-phosphate dehydrogenase (307 aa).

Residues histidine 126 and threonine 127 each coordinate substrate. 3 residues coordinate a divalent metal cation: histidine 156, histidine 195, and histidine 251. The substrate site is built by lysine 259, asparagine 268, and arginine 277.

This sequence belongs to the PdxA family. Homodimer. Zn(2+) is required as a cofactor. It depends on Mg(2+) as a cofactor. Requires Co(2+) as cofactor.

It is found in the cytoplasm. It catalyses the reaction 4-(phosphooxy)-L-threonine + NAD(+) = 3-amino-2-oxopropyl phosphate + CO2 + NADH. Its pathway is cofactor biosynthesis; pyridoxine 5'-phosphate biosynthesis; pyridoxine 5'-phosphate from D-erythrose 4-phosphate: step 4/5. In terms of biological role, catalyzes the NAD(P)-dependent oxidation of 4-(phosphooxy)-L-threonine (HTP) into 2-amino-3-oxo-4-(phosphooxy)butyric acid which spontaneously decarboxylates to form 3-amino-2-oxopropyl phosphate (AHAP). In Helicobacter pylori (strain ATCC 700392 / 26695) (Campylobacter pylori), this protein is 4-hydroxythreonine-4-phosphate dehydrogenase.